A 189-amino-acid polypeptide reads, in one-letter code: Molybdopterin synthase catalytic subunit (189 aa).

At Ser20 the chain carries Phosphoserine. Substrate-binding positions include 143-144 (HR), Lys159, and 166-168 (KKE).

It belongs to the MoaE family. MOCS2B subfamily. Heterotetramer; composed of 2 small (MOCS2A) and 2 large (MOCS2B) subunits.

The protein resides in the cytoplasm. The protein localises to the cytosol. It catalyses the reaction 2 [molybdopterin-synthase sulfur-carrier protein]-C-terminal-Gly-aminoethanethioate + cyclic pyranopterin phosphate + H2O = molybdopterin + 2 [molybdopterin-synthase sulfur-carrier protein]-C-terminal Gly-Gly + 2 H(+). It functions in the pathway cofactor biosynthesis; molybdopterin biosynthesis. Its function is as follows. Catalytic subunit of the molybdopterin synthase complex, a complex that catalyzes the conversion of precursor Z into molybdopterin. Acts by mediating the incorporation of 2 sulfur atoms from thiocarboxylated MOCS2A into precursor Z to generate a dithiolene group. The chain is Molybdopterin synthase catalytic subunit from Bos taurus (Bovine).